Consider the following 210-residue polypeptide: Thymidylate kinase (210 aa).

11–18 (GLEGAGKS) contacts ATP.

The protein belongs to the thymidylate kinase family.

The enzyme catalyses dTMP + ATP = dTDP + ADP. In terms of biological role, phosphorylation of dTMP to form dTDP in both de novo and salvage pathways of dTTP synthesis. This Histophilus somni (strain 129Pt) (Haemophilus somnus) protein is Thymidylate kinase.